Here is a 238-residue protein sequence, read N- to C-terminus: Urease subunit alpha (238 aa).

Residues 1-102 (MKLTPKELDK…LVTVHTPIES (102 aa)) are urease gamma. Positions 103-238 (KGKLVPGELF…DDNYVKTIKE (136 aa)) are urease beta.

The protein in the N-terminal section; belongs to the urease gamma subunit family. This sequence in the C-terminal section; belongs to the urease beta subunit family. In terms of assembly, heterohexamer of 3 UreA (alpha) and 3 UreB (beta) subunits.

The protein resides in the cytoplasm. The catalysed reaction is urea + 2 H2O + H(+) = hydrogencarbonate + 2 NH4(+). It participates in nitrogen metabolism; urea degradation; CO(2) and NH(3) from urea (urease route): step 1/1. The polypeptide is Urease subunit alpha (Helicobacter acinonychis (strain Sheeba)).